The following is a 436-amino-acid chain: Cysteine--tRNA ligase (436 aa).

A Zn(2+)-binding site is contributed by Cys-24. The short motif at 26 to 36 (PTVYNHIHIGN) is the 'HIGH' region element. Residues Cys-202, His-227, and Glu-231 each coordinate Zn(2+). A 'KMSKS' region motif is present at residues 259-263 (KMSKS). Lys-262 contributes to the ATP binding site.

The protein belongs to the class-I aminoacyl-tRNA synthetase family. As to quaternary structure, monomer. It depends on Zn(2+) as a cofactor.

The protein resides in the cytoplasm. It catalyses the reaction tRNA(Cys) + L-cysteine + ATP = L-cysteinyl-tRNA(Cys) + AMP + diphosphate. The sequence is that of Cysteine--tRNA ligase from Ureaplasma parvum serovar 3 (strain ATCC 700970).